The sequence spans 298 residues: ADP/ATP translocase 2 (298 aa).

An N-acetylmethionine modification is found at Met-1. Topologically, residues 1–7 are mitochondrial intermembrane; that stretch reads MTDAAVS. The residue at position 2 (Thr-2) is an N-acetylthreonine; in ADP/ATP translocase 2, N-terminally processed. The stretch at 6–98 is one Solcar 1 repeat; the sequence is VSFAKDFLAG…FAFKDKYKQI (93 aa). Ser-7 bears the Phosphoserine mark. A helical transmembrane segment spans residues 8–37; sequence FAKDFLAGGVAAAISKTAVAPIERVKLLLQ. Lys-23 carries the post-translational modification N6-malonyllysine. Residues 38 to 74 are Mitochondrial matrix-facing; it reads VQHASKQITADKQYKGIIDCVVRIPKEQGVLSFWRGN. At Lys-43 the chain carries N6-succinyllysine. Lys-52 bears the N6,N6,N6-trimethyllysine; alternate mark. Residue Lys-52 is modified to N6,N6-dimethyllysine; alternate. Lys-52 carries the N6-methyllysine; alternate modification. Residues 75–99 traverse the membrane as a helical segment; that stretch reads LANVIRYFPTQALNFAFKDKYKQIF. Residues Arg-80 and Lys-92 each coordinate ADP. N6-malonyllysine occurs at positions 92 and 96. The Mitochondrial intermembrane portion of the chain corresponds to 100 to 109; it reads LGGVDKRTQF. N6-acetyllysine; alternate is present on Lys-105. Lys-105 carries the N6-succinyllysine; alternate modification. Residues 110–130 traverse the membrane as a helical segment; it reads WRYFAGNLASGGAAGATSLCF. 2 Solcar repeats span residues 111 to 201 and 212 to 297; these read RYFA…AKGM and ISWM…IKKY. Residues 131-178 are Mitochondrial matrix-facing; it reads VYPLDFARTRLAADVGKAGAEREFKGLGDCLVKIYKSDGIKGLYQGFN. N6-methyllysine; alternate is present on Lys-147. An N6-acetyllysine; alternate mark is found at Lys-147 and Lys-155. N6-succinyllysine; alternate occurs at positions 147 and 155. Residue Lys-147 is modified to N6-malonyllysine; alternate. 2 positions are modified to N6-acetyllysine: Lys-163 and Lys-166. The chain crosses the membrane as a helical span at residues 179–199; sequence VSVQGIIIYRAAYFGIYDTAK. Topologically, residues 200-210 are mitochondrial intermembrane; the sequence is GMLPDPKNTHI. A helical transmembrane segment spans residues 211-231; the sequence is FISWMIAQSVTAVAGLTSYPF. Residues 232–273 lie on the Mitochondrial matrix side of the membrane; it reads DTVRRRMMMQSGRKGTDIMYTGTLDCWRKIARDEGGKAFFKG. Residue Arg-235 participates in ADP binding. The important for transport activity stretch occupies residues 235–240; that stretch reads RRRMMM. The short motif at 235–240 is the Nucleotide carrier signature motif element; it reads RRRMMM. Lys-268 is modified (N6-acetyllysine; alternate). The residue at position 268 (Lys-268) is an N6-succinyllysine; alternate. Residues 274 to 291 traverse the membrane as a helical segment; that stretch reads AWSNVLRGMGGAFVLVLY. The Mitochondrial intermembrane portion of the chain corresponds to 292–298; that stretch reads DEIKKYT.

This sequence belongs to the mitochondrial carrier (TC 2.A.29) family. In terms of assembly, monomer. Component of the MMXD complex, which includes CIAO1, ERCC2, CIAO2B, MMS19 and SLC25A5/ANT2. Interacts with AK4. Interacts with TIMM44; leading to inhibit the presequence translocase TIMM23, thereby promoting stabilization of PINK1. In terms of processing, trimethylated by ANTKMT at Lys-52. As to expression, present in kidney, brain, heart, liver and skeletal muscle.

The protein localises to the mitochondrion inner membrane. The protein resides in the membrane. It catalyses the reaction ADP(in) + ATP(out) = ADP(out) + ATP(in). The catalysed reaction is H(+)(in) = H(+)(out). With respect to regulation, the matrix-open state (m-state) is inhibited by the membrane-permeable bongkrekic acid (BKA). The cytoplasmic-open state (c-state) is inhibited by the membrane-impermeable toxic inhibitor carboxyatractyloside (CATR). Proton transporter activity is inhibited by ADP:ATP antiporter activity. Functionally, ADP:ATP antiporter that mediates import of ADP into the mitochondrial matrix for ATP synthesis, and export of ATP out to fuel the cell. Cycles between the cytoplasmic-open state (c-state) and the matrix-open state (m-state): operates by the alternating access mechanism with a single substrate-binding site intermittently exposed to either the cytosolic (c-state) or matrix (m-state) side of the inner mitochondrial membrane. In addition to its ADP:ATP antiporter activity, also involved in mitochondrial uncoupling and mitochondrial permeability transition pore (mPTP) activity. Plays a role in mitochondrial uncoupling by acting as a proton transporter: proton transport uncouples the proton flows via the electron transport chain and ATP synthase to reduce the efficiency of ATP production and cause mitochondrial thermogenesis. Proton transporter activity is inhibited by ADP:ATP antiporter activity, suggesting that SLC25A5/ANT2 acts as a master regulator of mitochondrial energy output by maintaining a delicate balance between ATP production (ADP:ATP antiporter activity) and thermogenesis (proton transporter activity). Proton transporter activity requires free fatty acids as cofactor, but does not transport it. Probably mediates mitochondrial uncoupling in tissues that do not express UCP1. Also plays a key role in mPTP opening, a non-specific pore that enables free passage of the mitochondrial membranes to solutes of up to 1.5 kDa, and which contributes to cell death. It is however unclear if SLC25A5/ANT2 constitutes a pore-forming component of mPTP or regulates it. Acts as a regulator of mitophagy independently of ADP:ATP antiporter activity: promotes mitophagy via interaction with TIMM44, leading to inhibit the presequence translocase TIMM23, thereby promoting stabilization of PINK1. As part of the mitotic spindle-associated MMXD complex it may play a role in chromosome segregation. This chain is ADP/ATP translocase 2, found in Rattus norvegicus (Rat).